A 506-amino-acid chain; its full sequence is UDP-N-acetylmuramoyl-L-alanyl-D-glutamate--2,6-diaminopimelate ligase (506 aa).

Ser42 contributes to the UDP-N-acetyl-alpha-D-muramoyl-L-alanyl-D-glutamate binding site. Residue 125–131 (GTSGKTT) coordinates ATP. UDP-N-acetyl-alpha-D-muramoyl-L-alanyl-D-glutamate-binding positions include 166–167 (TT), Ser193, and Arg201. Lys233 is subject to N6-carboxylysine. Residues Arg395, 419–422 (DNPR), Gly475, and Glu479 each bind meso-2,6-diaminopimelate. Residues 419–422 (DNPR) carry the Meso-diaminopimelate recognition motif motif.

Belongs to the MurCDEF family. MurE subfamily. The cofactor is Mg(2+). Post-translationally, carboxylation is probably crucial for Mg(2+) binding and, consequently, for the gamma-phosphate positioning of ATP.

It is found in the cytoplasm. The enzyme catalyses UDP-N-acetyl-alpha-D-muramoyl-L-alanyl-D-glutamate + meso-2,6-diaminopimelate + ATP = UDP-N-acetyl-alpha-D-muramoyl-L-alanyl-gamma-D-glutamyl-meso-2,6-diaminopimelate + ADP + phosphate + H(+). The protein operates within cell wall biogenesis; peptidoglycan biosynthesis. In terms of biological role, catalyzes the addition of meso-diaminopimelic acid to the nucleotide precursor UDP-N-acetylmuramoyl-L-alanyl-D-glutamate (UMAG) in the biosynthesis of bacterial cell-wall peptidoglycan. The sequence is that of UDP-N-acetylmuramoyl-L-alanyl-D-glutamate--2,6-diaminopimelate ligase from Streptomyces avermitilis (strain ATCC 31267 / DSM 46492 / JCM 5070 / NBRC 14893 / NCIMB 12804 / NRRL 8165 / MA-4680).